The sequence spans 144 residues: Transcription antitermination protein NusB (144 aa).

This sequence belongs to the NusB family.

In terms of biological role, involved in transcription antitermination. Required for transcription of ribosomal RNA (rRNA) genes. Binds specifically to the boxA antiterminator sequence of the ribosomal RNA (rrn) operons. The protein is Transcription antitermination protein NusB of Streptococcus thermophilus (strain CNRZ 1066).